We begin with the raw amino-acid sequence, 143 residues long: Large ribosomal subunit protein uL11 (143 aa).

Belongs to the universal ribosomal protein uL11 family. In terms of assembly, part of the ribosomal stalk of the 50S ribosomal subunit. Interacts with L10 and the large rRNA to form the base of the stalk. L10 forms an elongated spine to which L12 dimers bind in a sequential fashion forming a multimeric L10(L12)X complex. Post-translationally, one or more lysine residues are methylated.

Its function is as follows. Forms part of the ribosomal stalk which helps the ribosome interact with GTP-bound translation factors. This Methylibium petroleiphilum (strain ATCC BAA-1232 / LMG 22953 / PM1) protein is Large ribosomal subunit protein uL11.